The following is a 616-amino-acid chain: Protein translocase subunit SecD (616 aa).

Helical transmembrane passes span 11–31 (LMVIFIVAIGILYSLPNIYGE), 453–473 (QGINASLWGLVAVIAFMLFYY), 475–495 (MFGVIASFALVINIVLLVGLM), 497–517 (ILPGATLSMPGIAGIVLTLGM), 547–569 (YNGAFTSIFDANLTTILTAIILY), and 585–605 (LGVAISMFTAITGTRALVNAL).

The protein belongs to the SecD/SecF family. SecD subfamily. Forms a complex with SecF. Part of the essential Sec protein translocation apparatus which comprises SecA, SecYEG and auxiliary proteins SecDF-YajC and YidC.

Its subcellular location is the cell inner membrane. Functionally, part of the Sec protein translocase complex. Interacts with the SecYEG preprotein conducting channel. SecDF uses the proton motive force (PMF) to complete protein translocation after the ATP-dependent function of SecA. This chain is Protein translocase subunit SecD, found in Haemophilus influenzae (strain ATCC 51907 / DSM 11121 / KW20 / Rd).